Consider the following 130-residue polypeptide: Small ribosomal subunit protein uS8 (130 aa).

The protein belongs to the universal ribosomal protein uS8 family. Part of the 30S ribosomal subunit. Contacts proteins S5 and S12.

One of the primary rRNA binding proteins, it binds directly to 16S rRNA central domain where it helps coordinate assembly of the platform of the 30S subunit. This is Small ribosomal subunit protein uS8 from Ectopseudomonas mendocina (strain ymp) (Pseudomonas mendocina).